Here is a 657-residue protein sequence, read N- to C-terminus: 1-deoxy-D-xylulose-5-phosphate synthase (657 aa).

Thiamine diphosphate-binding positions include histidine 73 and 113–115; that span reads SHA. Aspartate 145 lines the Mg(2+) pocket. Residues 146–147, asparagine 175, tyrosine 293, and glutamate 375 contribute to the thiamine diphosphate site; that span reads GA. Residue asparagine 175 coordinates Mg(2+).

It belongs to the transketolase family. DXPS subfamily. As to quaternary structure, homodimer. Mg(2+) serves as cofactor. The cofactor is thiamine diphosphate.

The catalysed reaction is D-glyceraldehyde 3-phosphate + pyruvate + H(+) = 1-deoxy-D-xylulose 5-phosphate + CO2. Its pathway is metabolic intermediate biosynthesis; 1-deoxy-D-xylulose 5-phosphate biosynthesis; 1-deoxy-D-xylulose 5-phosphate from D-glyceraldehyde 3-phosphate and pyruvate: step 1/1. Its function is as follows. Catalyzes the acyloin condensation reaction between C atoms 2 and 3 of pyruvate and glyceraldehyde 3-phosphate to yield 1-deoxy-D-xylulose-5-phosphate (DXP). In Pseudarthrobacter chlorophenolicus (strain ATCC 700700 / DSM 12829 / CIP 107037 / JCM 12360 / KCTC 9906 / NCIMB 13794 / A6) (Arthrobacter chlorophenolicus), this protein is 1-deoxy-D-xylulose-5-phosphate synthase.